The sequence spans 538 residues: CTP synthase (538 aa).

The tract at residues 1–267 is amidoligase domain; that stretch reads MDRAKFIFVT…LTPIARRFNL (267 aa). Serine 15 serves as a coordination point for CTP. Residue serine 15 coordinates UTP. ATP-binding positions include 16 to 21 and aspartate 73; that span reads SLGKGI. 2 residues coordinate Mg(2+): aspartate 73 and glutamate 141. CTP-binding positions include 148–150, 188–193, and lysine 224; these read DME and KTKPTQ. UTP contacts are provided by residues 188-193 and lysine 224; that span reads KTKPTQ. The Glutamine amidotransferase type-1 domain maps to 292-538; that stretch reads KIGFVGKYLS…DFIKSALSKS (247 aa). Glycine 351 is an L-glutamine binding site. Cysteine 378 (nucleophile; for glutamine hydrolysis) is an active-site residue. L-glutamine is bound by residues 379–382, glutamate 402, and arginine 469; that span reads LGMQ. Residues histidine 513 and glutamate 515 contribute to the active site.

This sequence belongs to the CTP synthase family. Homotetramer.

It catalyses the reaction UTP + L-glutamine + ATP + H2O = CTP + L-glutamate + ADP + phosphate + 2 H(+). It carries out the reaction L-glutamine + H2O = L-glutamate + NH4(+). The catalysed reaction is UTP + NH4(+) + ATP = CTP + ADP + phosphate + 2 H(+). It participates in pyrimidine metabolism; CTP biosynthesis via de novo pathway; CTP from UDP: step 2/2. With respect to regulation, allosterically activated by GTP, when glutamine is the substrate; GTP has no effect on the reaction when ammonia is the substrate. The allosteric effector GTP functions by stabilizing the protein conformation that binds the tetrahedral intermediate(s) formed during glutamine hydrolysis. Inhibited by the product CTP, via allosteric rather than competitive inhibition. Its function is as follows. Catalyzes the ATP-dependent amination of UTP to CTP with either L-glutamine or ammonia as the source of nitrogen. Regulates intracellular CTP levels through interactions with the four ribonucleotide triphosphates. The chain is CTP synthase from Helicobacter pylori (strain ATCC 700392 / 26695) (Campylobacter pylori).